We begin with the raw amino-acid sequence, 153 residues long: Nucleoside diphosphate kinase (153 aa).

The ATP site is built by Lys13, Phe61, Arg89, Thr95, Arg106, and Asn116. The Pros-phosphohistidine intermediate role is filled by His119.

Belongs to the NDK family. The cofactor is Mg(2+).

It is found in the cytoplasm. The protein resides in the cell membrane. The enzyme catalyses a 2'-deoxyribonucleoside 5'-diphosphate + ATP = a 2'-deoxyribonucleoside 5'-triphosphate + ADP. It carries out the reaction a ribonucleoside 5'-diphosphate + ATP = a ribonucleoside 5'-triphosphate + ADP. Major role in the synthesis of nucleoside triphosphates other than ATP. The ATP gamma phosphate is transferred to the NDP beta phosphate via a ping-pong mechanism, using a phosphorylated active-site intermediate. This chain is Nucleoside diphosphate kinase, found in Gallus gallus (Chicken).